The following is a 290-amino-acid chain: MQGKIIKSLAGFYYVESEGQVYQTRARGNFRKRGETPYVGDIVDFSAEDNSEGYILAIYPRKNSLVRPPIVNIDQAVVIMSAKEPEFNSNLLDRFLILLEHKAIHPVVYISKMDLLDSPEEIKAIGRQYQAIGYDFVTSLEELLPLLADKITVFMGQTGVGKSTLLNRIAPELALETGEISDSLGRGRHTTRAVSFYNTHGGKIADTPGFSSLDYDIANAEDLNEAFPELRRLSHECKFRSCTHTHEPKCAVKAALETGELWPVRYEHYLQFLSEIENRRETYKKVIKRK.

The region spanning 62–213 (KNSLVRPPIV…IADTPGFSSL (152 aa)) is the CP-type G domain. Residues 111–114 (SKMD) and 156–164 (GQTGVGKST) contribute to the GTP site. Zn(2+) contacts are provided by Cys237, Cys242, His244, and Cys250.

This sequence belongs to the TRAFAC class YlqF/YawG GTPase family. RsgA subfamily. Monomer. Associates with 30S ribosomal subunit, binds 16S rRNA. Zn(2+) is required as a cofactor.

Its subcellular location is the cytoplasm. Its function is as follows. One of several proteins that assist in the late maturation steps of the functional core of the 30S ribosomal subunit. Helps release RbfA from mature subunits. May play a role in the assembly of ribosomal proteins into the subunit. Circularly permuted GTPase that catalyzes slow GTP hydrolysis, GTPase activity is stimulated by the 30S ribosomal subunit. This Streptococcus pyogenes serotype M3 (strain ATCC BAA-595 / MGAS315) protein is Small ribosomal subunit biogenesis GTPase RsgA.